The following is a 282-amino-acid chain: Non-selective voltage-gated ion channel VDAC2 (282 aa).

N-acetylalanine is present on Ala1. A run of 19 beta stranded transmembrane segments spans residues 25 to 34 (LVKLDVKTKS), 38 to 46 (VEFTTSGTS), 53 to 63 (VNGSLETKYKW), 68 to 75 (LTFTEKWN), 79 to 88 (TLGTEIAIED), 94 to 103 (LKLTFDTTFS), 110 to 119 (SGKVKAAYKQ), 122 to 129 (VNLGCDVD), 136 to 144 (AIHGSAVVG), 149 to 157 (LAGYQMTFD), 162 to 174 (KLTKNNFAVGYKT), 177 to 184 (FQLHTNVN), 188 to 197 (EFAGSIYQKV), 201 to 210 (METAVNLAWT), 217 to 226 (RFGIAAKYQL), 230 to 237 (AAISAKVN), 241 to 250 (LVGVGYTQTL), 253 to 262 (GVKLTLSALV), and 272 to 281 (HKLGLGLELE). NAD(+)-binding positions include 241 to 243 (LVG) and 259 to 263 (SALVD).

Belongs to the eukaryotic mitochondrial porin family. As to quaternary structure, monomer, homodimer and higher order oligomers; formation of higher order structures is necessary for scramblase activity. In terms of tissue distribution, expressed in skeletal muscle and oocytes.

It is found in the mitochondrion outer membrane. It localises to the membrane. It catalyses the reaction chloride(in) = chloride(out). It carries out the reaction K(+)(in) = K(+)(out). The enzyme catalyses a 1,2-diacyl-sn-glycero-3-phospho-L-serine(in) = a 1,2-diacyl-sn-glycero-3-phospho-L-serine(out). The catalysed reaction is a 1,2-diacyl-sn-glycero-3-phosphocholine(in) = a 1,2-diacyl-sn-glycero-3-phosphocholine(out). It catalyses the reaction a 1,2-diacyl-sn-glycero-3-phospho-(1D-myo-inositol)(in) = a 1,2-diacyl-sn-glycero-3-phospho-(1D-myo-inositol)(out). Its function is as follows. Non-selective voltage-gated ion channel that mediates the transport of anions and cations through the mitochondrion outer membrane and plasma membrane. The channel adopts an open conformation at zero mV and a closed conformation at both positive and negative potentials. There are two populations of channels; the main that functions in a lower open-state conductance with lower ion selectivity, that switch, in a voltage-dependent manner, from the open to a low-conducting 'closed' state and the other that has a normal ion selectivity in the typical high conductance, 'open' state. In terms of biological role, catalyzes the scrambling of phospholipids across the outer mitochondrial membrane; the mechanism is unrelated to channel activity and is capable of translocating both anionic and zwitterionic phospholipids. The sequence is that of Non-selective voltage-gated ion channel VDAC2 from Xenopus laevis (African clawed frog).